Reading from the N-terminus, the 63-residue chain is Large ribosomal subunit protein uL29 (63 aa).

It belongs to the universal ribosomal protein uL29 family.

This is Large ribosomal subunit protein uL29 from Pseudoalteromonas translucida (strain TAC 125).